The chain runs to 497 residues: Actin-binding protein WASF2 (497 aa).

Disordered regions lie at residues 173–203 and 239–436; these read KEKR…KEEW and ENVD…SDAR. The segment covering 252–263 has biased composition (low complexity); it reads SDSASSPSPSFS. Pro residues-rich tracts occupy residues 298–335 and 343–403; these read SHPP…PPLP and GTPP…PPLP. Residues 435–452 form the WH2 domain; it reads ARSDLLSAIRQGFQLRRV. A Phosphoserine modification is found at Ser473.

It belongs to the SCAR/WAVE family. As to quaternary structure, binds actin and the Arp2/3 complex. Interacts with BAIAP2. Component of the WAVE2 complex composed of ABI1, CYFIP1/SRA1, NCKAP1/NAP1 (NCKAP1l/HEM1 in hematopoietic cells) and WASF2/WAVE2. Directly interacts with BRK1. Interacts with human cytomegalovirus protein UL135. Interacts with FNBP1L (via the SH3 domain).

The protein resides in the cytoplasm. It localises to the cytoskeleton. It is found in the cell projection. Its subcellular location is the lamellipodium. The protein localises to the basolateral cell membrane. Functionally, downstream effector molecule involved in the transmission of signals from tyrosine kinase receptors and small GTPases to the actin cytoskeleton. Promotes formation of actin filaments. Part of the WAVE complex that regulates lamellipodia formation. The WAVE complex regulates actin filament reorganization via its interaction with the Arp2/3 complex. This Mus musculus (Mouse) protein is Actin-binding protein WASF2.